Consider the following 329-residue polypeptide: ADP-L-glycero-D-manno-heptose-6-epimerase (329 aa).

NADP(+) is bound by residues 10–11 (FI), 31–32 (DD), Lys38, Lys53, 74–78 (QGACS), and Asn91. Tyr138 serves as the catalytic Proton acceptor. Lys142 lines the NADP(+) pocket. Asn167 lines the substrate pocket. 2 residues coordinate NADP(+): Val168 and Lys176. Lys176 (proton acceptor) is an active-site residue. Substrate contacts are provided by residues Arg178, His185, 199 to 202 (FAGW), Arg212, and Tyr291.

It belongs to the NAD(P)-dependent epimerase/dehydratase family. HldD subfamily. In terms of assembly, homopentamer. It depends on NADP(+) as a cofactor.

The enzyme catalyses ADP-D-glycero-beta-D-manno-heptose = ADP-L-glycero-beta-D-manno-heptose. It functions in the pathway nucleotide-sugar biosynthesis; ADP-L-glycero-beta-D-manno-heptose biosynthesis; ADP-L-glycero-beta-D-manno-heptose from D-glycero-beta-D-manno-heptose 7-phosphate: step 4/4. It participates in bacterial outer membrane biogenesis; LPS core biosynthesis. Functionally, catalyzes the interconversion between ADP-D-glycero-beta-D-manno-heptose and ADP-L-glycero-beta-D-manno-heptose via an epimerization at carbon 6 of the heptose. The chain is ADP-L-glycero-D-manno-heptose-6-epimerase from Bordetella parapertussis (strain 12822 / ATCC BAA-587 / NCTC 13253).